Reading from the N-terminus, the 98-residue chain is NADH-ubiquinone oxidoreductase chain 4L (98 aa).

Helical transmembrane passes span 1–21 (MMPI…GALV), 28–48 (STLL…ALLI), and 59–79 (APLI…ALLV).

It belongs to the complex I subunit 4L family. In terms of assembly, core subunit of respiratory chain NADH dehydrogenase (Complex I) which is composed of 45 different subunits.

It is found in the mitochondrion inner membrane. The catalysed reaction is a ubiquinone + NADH + 5 H(+)(in) = a ubiquinol + NAD(+) + 4 H(+)(out). Its function is as follows. Core subunit of the mitochondrial membrane respiratory chain NADH dehydrogenase (Complex I) which catalyzes electron transfer from NADH through the respiratory chain, using ubiquinone as an electron acceptor. Part of the enzyme membrane arm which is embedded in the lipid bilayer and involved in proton translocation. This is NADH-ubiquinone oxidoreductase chain 4L (MT-ND4L) from Distoechurus pennatus (Feather-tailed possum).